The following is a 257-amino-acid chain: Pantothenate synthetase (257 aa).

Residue 29–36 participates in ATP binding; sequence MGNLHAGH. H36 functions as the Proton donor in the catalytic mechanism. Residue Q60 coordinates (R)-pantoate. Q60 is a binding site for beta-alanine. 145–148 contributes to the ATP binding site; the sequence is GEKD. Q151 lines the (R)-pantoate pocket. Residues V174 and 182 to 185 contribute to the ATP site; that span reads LSSR.

It belongs to the pantothenate synthetase family. As to quaternary structure, homodimer.

The protein localises to the cytoplasm. It catalyses the reaction (R)-pantoate + beta-alanine + ATP = (R)-pantothenate + AMP + diphosphate + H(+). It participates in cofactor biosynthesis; (R)-pantothenate biosynthesis; (R)-pantothenate from (R)-pantoate and beta-alanine: step 1/1. Functionally, catalyzes the condensation of pantoate with beta-alanine in an ATP-dependent reaction via a pantoyl-adenylate intermediate. The protein is Pantothenate synthetase of Coxiella burnetii (strain Dugway 5J108-111).